A 476-amino-acid chain; its full sequence is Inner membrane transporter YcaM (476 aa).

Residues 1 to 9 (MAGNVQEKQ) lie on the Cytoplasmic side of the membrane. A helical transmembrane segment spans residues 10 to 30 (LRWYNIALMSFITVWGFGNVV). At 31-38 (NNYANQGL) the chain is on the periplasmic side. Residues 39–59 (VVVFSWVFIFALYFTPYALIV) traverse the membrane as a helical segment. Over 60–80 (GQLGSTFKDGKGGVSTWIKHT) the chain is Cytoplasmic. The chain crosses the membrane as a helical span at residues 81 to 101 (MGPGLAYLAAWTYWVVHIPYL). Over 102–125 (AQKPQAILIALGWAMKGDGSLIKE) the chain is Periplasmic. Residues 126-146 (YSVVALQGLTLVLFIFFMWVA) traverse the membrane as a helical segment. Over 147–154 (SRGMKSLK) the chain is Cytoplasmic. The helical transmembrane segment at 155–175 (IVGSVAGIAMFVMSLLYVAMA) threads the bilayer. Residues 176-195 (VTAPAITEVHIATTNITWET) lie on the Periplasmic side of the membrane. Residues 196–216 (FIPHIDFTYITTISMLVFAVG) traverse the membrane as a helical segment. Over 217–240 (GAEKISPYVNQTRNPGKEFPKGML) the chain is Cytoplasmic. Residues 241 to 261 (CLAVMVAVCAILGSLAMGMMF) form a helical membrane-spanning segment. Residues 262 to 291 (DSRNIPDDLMTNGQYYAFQKLGEYYNMGNT) lie on the Periplasmic side of the membrane. A helical transmembrane segment spans residues 292–312 (LMVIYAIANTLGQVAALVFSI). Residues 313 to 343 (DAPLKVLLGDADSKYIPASLCRTNASGTPVN) are Cytoplasmic-facing. Residues 344–364 (GYFLTLVLVAILIMLPTLGIG) form a helical membrane-spanning segment. The Periplasmic portion of the chain corresponds to 365–375 (DMNNLYKWLLN). Residues 376–396 (LNSVVMPLRYLWVFVAFIAVV) form a helical membrane-spanning segment. The Cytoplasmic portion of the chain corresponds to 397–414 (RLAQKYKPEYVFIRNKPL). Residues 415–435 (AMTVGIWCFAFTAFACLTGIF) traverse the membrane as a helical segment. The Periplasmic segment spans residues 436 to 448 (PKMEAFTAEWTFQ). The helical transmembrane segment at 449–469 (LALNVATPFVLVGLGLIFPLL) threads the bilayer. Over 470 to 476 (ARKANSK) the chain is Cytoplasmic.

Belongs to the amino acid-polyamine-organocation (APC) superfamily.

It localises to the cell inner membrane. This chain is Inner membrane transporter YcaM (ycaM), found in Escherichia coli (strain K12).